The primary structure comprises 396 residues: Dimethyladenosine transferase 2, mitochondrial (396 aa).

The transit peptide at 1 to 19 (MWIPVVGLPRRLRLSALAG) directs the protein to the mitochondrion. A disordered region spans residues 44 to 64 (LSDSSPQLWPEPDFRNPPRKA). S-adenosyl-L-methionine contacts are provided by valine 75, glutamate 124, and aspartate 150. A DNA-binding region spans residues 330–331 (RR).

Belongs to the class I-like SAM-binding methyltransferase superfamily. rRNA adenine N(6)-methyltransferase family. KsgA subfamily. Homodimer. Component of the mitochondrial transcription initiation complex, composed at least of TFB2M, TFAM and POLRMT. In this complex TFAM recruits POLRMT to the promoter whereas TFB2M induces structural changes in POLRMT to enable promoter opening and trapping of the DNA non-template strand. Interacts with mitochondrial RNA polymerase POLRMT. Interacts with TFAM. Ubiquitously expressed.

It is found in the mitochondrion. The enzyme catalyses adenosine in rRNA + S-adenosyl-L-methionine = N(6)-methyladenosine in rRNA + S-adenosyl-L-homocysteine + H(+). In terms of biological role, S-adenosyl-L-methionine-dependent rRNA methyltransferase which may methylate two specific adjacent adenosines in the loop of a conserved hairpin near the 3'-end of 12S mitochondrial rRNA. Component of the mitochondrial transcription initiation complex, composed at least of TFB2M, TFAM and POLRMT that is required for basal transcription of mitochondrial DNA. In this complex, TFAM recruits POLRMT to a specific promoter whereas TFB2M induces structural changes in POLRMT to enable promoter opening and trapping of the DNA non-template strand. Stimulates transcription independently of the methyltransferase activity. This is Dimethyladenosine transferase 2, mitochondrial from Homo sapiens (Human).